Consider the following 275-residue polypeptide: NH(3)-dependent NAD(+) synthetase (275 aa).

ATP is bound at residue 46–53; sequence GISGGQDS. D52 contributes to the Mg(2+) binding site. Deamido-NAD(+) is bound at residue R140. T160 contacts ATP. Residue E165 participates in Mg(2+) binding. Residues K173 and D180 each coordinate deamido-NAD(+). ATP-binding residues include K189 and T211. 260-261 lines the deamido-NAD(+) pocket; sequence HK.

Belongs to the NAD synthetase family. Homodimer.

It carries out the reaction deamido-NAD(+) + NH4(+) + ATP = AMP + diphosphate + NAD(+) + H(+). It participates in cofactor biosynthesis; NAD(+) biosynthesis; NAD(+) from deamido-NAD(+) (ammonia route): step 1/1. In terms of biological role, catalyzes the ATP-dependent amidation of deamido-NAD to form NAD. Uses ammonia as a nitrogen source. The sequence is that of NH(3)-dependent NAD(+) synthetase from Escherichia coli O127:H6 (strain E2348/69 / EPEC).